A 34-amino-acid chain; its full sequence is Somatostatin (34 aa).

Residues 1–20 are disordered; that stretch reads AVERPRQDGQVHEPPGRERK. Cysteine 23 and cysteine 34 are disulfide-bonded.

This sequence belongs to the somatostatin family.

The protein resides in the secreted. In terms of biological role, somatostatin inhibits the release of somatotropin. The protein is Somatostatin (sst) of Myxine glutinosa (Atlantic hagfish).